Consider the following 435-residue polypeptide: Nucleoredoxin (435 aa).

Serine 2 bears the N-acetylserine mark. Positions 167-321 (PKPFREVIAG…VLELSDSNAA (155 aa)) constitute a Thioredoxin domain.

This sequence belongs to the nucleoredoxin family. Associates with the phosphatase 2A holoenzyme. Interacts with PPP2CA; the interaction is direct. Interacts with DVL1 (via PDZ domain); the interaction is direct and regulated by oxidative stress.

It localises to the cytoplasm. The protein resides in the cytosol. It is found in the nucleus. The catalysed reaction is [protein]-dithiol + NAD(+) = [protein]-disulfide + NADH + H(+). It catalyses the reaction [protein]-dithiol + NADP(+) = [protein]-disulfide + NADPH + H(+). Functions as a redox-dependent negative regulator of the Wnt signaling pathway, possibly by preventing ubiquitination of DVL3 by the BCR(KLHL12) complex. May also function as a transcriptional regulator act as a regulator of protein phosphatase 2A (PP2A). The polypeptide is Nucleoredoxin (NXN) (Homo sapiens (Human)).